A 152-amino-acid polypeptide reads, in one-letter code: Nascent polypeptide-associated complex subunit beta (152 aa).

Disordered regions lie at residues 19–39 (IGKG…AGDD) and 125–152 (NMQK…SKVE). Positions 23–32 (TPRRKVKRAP) are enriched in basic residues. In terms of domain architecture, NAC-A/B spans 36 to 101 (AGDDKKLQAT…GEDKELTELV (66 aa)).

Belongs to the NAC-beta family. As to quaternary structure, part of the nascent polypeptide-associated complex (NAC), consisting of npc-1/egd2 and npc-2/egd1. NAC associates with ribosomes via npc-2/egd1.

The protein resides in the cytoplasm. It localises to the nucleus. Component of the nascent polypeptide-associated complex (NAC), a dynamic component of the ribosomal exit tunnel, protecting the emerging polypeptides from interaction with other cytoplasmic proteins to ensure appropriate nascent protein targeting. The NAC complex also promotes mitochondrial protein import by enhancing productive ribosome interactions with the outer mitochondrial membrane and blocks the inappropriate interaction of ribosomes translating non-secretory nascent polypeptides with translocation sites in the membrane of the endoplasmic reticulum. Npc-2/egd1 may act as a transcription factor that exert a negative effect on the expression of several genes that are transcribed by RNA polymerase II. This chain is Nascent polypeptide-associated complex subunit beta (npc-2), found in Neurospora crassa (strain ATCC 24698 / 74-OR23-1A / CBS 708.71 / DSM 1257 / FGSC 987).